The following is a 262-amino-acid chain: uncharacterized protein (262 aa).

This is an uncharacterized protein from Acanthamoeba polyphaga mimivirus (APMV).